The sequence spans 180 residues: Cytokinin-beta-glucosidase 3 (180 aa).

Hydrolyzes cytokinin glucosides thus liberating free cytokinins. In Panax ginseng (Korean ginseng), this protein is Cytokinin-beta-glucosidase 3 (ROLC3).